We begin with the raw amino-acid sequence, 321 residues long: MTKYALVGDVGGTNARLALCDVDSGEILKAKTYSGLDYPSLEAVVRVYLEEHNATVTDGCIAIACPITGDWVAMTNHVWAFSVAEMKKNLGFDHLEIINDFTAVSMAIPMLKTDHLIQFGGGEPQPNKPIAVYGAGTGLGVAHLVHVDKRWVSLPGEGGHVDFAPNSEEEAIILEQLRAEVGHVSAERVLSGPGLVNLYRAIVKADGRLPDNLRPKDITERALDDSCTDCRRALSLFCVIMGRFGGNLALTLGTFGGVYIAGGIVPRFLDFFTSSGFRGGFEDKGRFKSYVQDIPVYLIVHDQPGLLGAGAHLRQTLGQIL.

Residue 8-13 (GDVGGT) coordinates ATP.

It belongs to the bacterial glucokinase family.

The protein resides in the cytoplasm. It catalyses the reaction D-glucose + ATP = D-glucose 6-phosphate + ADP + H(+). In Cronobacter sakazakii (strain ATCC BAA-894) (Enterobacter sakazakii), this protein is Glucokinase.